A 953-amino-acid chain; its full sequence is Valine--tRNA ligase (953 aa).

The 'HIGH' region motif lies at 42–52 (PNVTGSLHMGH). The short motif at 554 to 558 (KMSKS) is the 'KMSKS' region element. Lysine 557 contributes to the ATP binding site. A coiled-coil region spans residues 884–953 (LIDKDAELAR…EAQKETIAAL (70 aa)).

The protein belongs to the class-I aminoacyl-tRNA synthetase family. ValS type 1 subfamily. Monomer.

It localises to the cytoplasm. The enzyme catalyses tRNA(Val) + L-valine + ATP = L-valyl-tRNA(Val) + AMP + diphosphate. In terms of biological role, catalyzes the attachment of valine to tRNA(Val). As ValRS can inadvertently accommodate and process structurally similar amino acids such as threonine, to avoid such errors, it has a 'posttransfer' editing activity that hydrolyzes mischarged Thr-tRNA(Val) in a tRNA-dependent manner. The protein is Valine--tRNA ligase of Photobacterium profundum (strain SS9).